A 229-amino-acid chain; its full sequence is Ribonuclease 3 (229 aa).

One can recognise an RNase III domain in the interval 4-133 (WEELQESVGF…FIGALYLDNG (130 aa)). Residue Glu-46 coordinates Mg(2+). Asp-50 is an active-site residue. The Mg(2+) site is built by Asp-119 and Glu-122. The active site involves Glu-122. The DRBM domain occupies 159-228 (DYKTQLQEIV…AQFAINKLIH (70 aa)).

This sequence belongs to the ribonuclease III family. As to quaternary structure, homodimer. Mg(2+) is required as a cofactor.

The protein resides in the cytoplasm. It carries out the reaction Endonucleolytic cleavage to 5'-phosphomonoester.. Its function is as follows. Digests double-stranded RNA. Involved in the processing of primary rRNA transcript to yield the immediate precursors to the large and small rRNAs (23S and 16S). Processes some mRNAs, and tRNAs when they are encoded in the rRNA operon. Processes pre-crRNA and tracrRNA of type II CRISPR loci if present in the organism. The sequence is that of Ribonuclease 3 from Listeria monocytogenes serovar 1/2a (strain ATCC BAA-679 / EGD-e).